Here is a 99-residue protein sequence, read N- to C-terminus: DNA-directed RNA polymerase subunit Rpo11 (99 aa).

The protein belongs to the archaeal Rpo11/eukaryotic RPB11/RPC19 RNA polymerase subunit family. Part of the RNA polymerase complex. Forms an Rpo3-Rpo10-Rpo11-Rpo12 complex upon coexpression.

It is found in the cytoplasm. It catalyses the reaction RNA(n) + a ribonucleoside 5'-triphosphate = RNA(n+1) + diphosphate. DNA-dependent RNA polymerase (RNAP) catalyzes the transcription of DNA into RNA using the four ribonucleoside triphosphates as substrates. The polypeptide is DNA-directed RNA polymerase subunit Rpo11 (Methanocaldococcus jannaschii (strain ATCC 43067 / DSM 2661 / JAL-1 / JCM 10045 / NBRC 100440) (Methanococcus jannaschii)).